Reading from the N-terminus, the 225-residue chain is MCDGNRRWAREAGFTDVSHGHRVGAKKIGEMVRWCDDVDVNLVTVYLLSMENLGRSSEELQLLFDIIADVADELARPETNCRVRLVGHLDLLPDPVACRLRKAEEATVNNTGIAVNMAVGYGGRQEIVDAVQKLLTIGKDEGLSVDELIESVKVDAISTHLYTSGQPDPDLVIRTSGEQRLSGFMLWQSAYSEIWFTDTYWPAFRRIDFLRAIRDYSQRSRRFGK.

Asp3 is a catalytic residue. Asp3 contacts Mg(2+). Substrate is bound by residues 4–7, Trp8, His21, and 49–51; these read GNRR and SME. Asn52 (proton acceptor) is an active-site residue. Residues Arg55, Arg174, and 180–182 each bind substrate; that span reads RLS. Glu193 is a Mg(2+) binding site.

Belongs to the UPP synthase family. In terms of assembly, homodimer. Requires Mg(2+) as cofactor.

In terms of biological role, catalyzes the condensation of isopentenyl diphosphate (IPP) with allylic pyrophosphates generating different type of terpenoids. The sequence is that of Isoprenyl transferase 1 from Corynebacterium glutamicum (strain ATCC 13032 / DSM 20300 / JCM 1318 / BCRC 11384 / CCUG 27702 / LMG 3730 / NBRC 12168 / NCIMB 10025 / NRRL B-2784 / 534).